The following is a 107-amino-acid chain: Large ribosomal subunit protein uL18c (107 aa).

This sequence belongs to the universal ribosomal protein uL18 family. In terms of assembly, part of the 50S ribosomal subunit; contacts the 5S rRNA.

The protein localises to the plastid. The protein resides in the chloroplast. Functionally, binds 5S rRNA, forms part of the central protuberance of the 50S subunit. The chain is Large ribosomal subunit protein uL18c (rpl18) from Guillardia theta (Cryptophyte).